The sequence spans 140 residues: Sex-regulated protein janus-B (140 aa).

Position 42 (R42) interacts with substrate. The active-site Proton acceptor is the H69. 110-112 (SRT) contributes to the substrate binding site.

It belongs to the janus family. As to expression, germline cells of adult males.

Functionally, janA and janB regulate somatic sex differentiation. The polypeptide is Sex-regulated protein janus-B (janB) (Drosophila melanogaster (Fruit fly)).